The primary structure comprises 438 residues: Protein DAY-LENGTH-DEPENDENT DELAYED-GREENING 1, chloroplastic (438 aa).

Residues 1-54 (MSLMSSSMVLCHCLSFSSQNPDPESSSSSLLRYKPCDSISLWGKRRKKLWRFVP) constitute a chloroplast transit peptide. The next 4 helical transmembrane spans lie at 216–236 (FLAV…DYLL), 314–334 (AFAN…LLYA), 359–379 (AFLI…SGWE), and 398–418 (ITIF…LWLF).

Belongs to the CemA family.

The protein resides in the plastid. The protein localises to the chloroplast envelope. It localises to the chloroplast membrane. The enzyme catalyses K(+)(in) + H(+)(out) = K(+)(out) + H(+)(in). The catalysed reaction is Ca(2+)(in) + H(+)(out) = Ca(2+)(out) + H(+)(in). Promotes K(+)/H(+) antiport activity supporting K(+) efflux to control H(+) homeostasis in chloroplasts. Also able to ensure Ca(2+)/H(+) antiport activity in vitro. Essential for chloroplast pH regulation and optimization of non-photochemical quenching (NPQ), a regulatory mechanism that dissipates excess light energy; acts downstream of PSBS but independently from PGR5 and FLAP1. The polypeptide is Protein DAY-LENGTH-DEPENDENT DELAYED-GREENING 1, chloroplastic (Arabidopsis thaliana (Mouse-ear cress)).